A 248-amino-acid chain; its full sequence is Probable transcriptional regulatory protein Acid_5948 (248 aa).

Belongs to the TACO1 family.

Its subcellular location is the cytoplasm. This is Probable transcriptional regulatory protein Acid_5948 from Solibacter usitatus (strain Ellin6076).